We begin with the raw amino-acid sequence, 145 residues long: Protein SprT-like (145 aa).

The SprT-like domain occupies 4–141 (TDYVKEVSRQ…CGNCHGKLRH (138 aa)). Zn(2+) is bound at residue histidine 64. Residue glutamate 65 is part of the active site. Residue histidine 68 participates in Zn(2+) binding.

This sequence belongs to the SprT family. Zn(2+) serves as cofactor.

The protein resides in the cytoplasm. This Streptococcus mutans serotype c (strain ATCC 700610 / UA159) protein is Protein SprT-like.